The sequence spans 406 residues: 3-oxoacyl-[acyl-carrier-protein] synthase 1 (406 aa).

The Ketosynthase family 3 (KS3) domain maps to 1–403 (MRRTVITGFG…GTNATLIFKR (403 aa)). Active-site for beta-ketoacyl synthase activity residues include cysteine 162, histidine 297, and histidine 332.

Belongs to the thiolase-like superfamily. Beta-ketoacyl-ACP synthases family. In terms of assembly, homodimer.

It localises to the cytoplasm. The enzyme catalyses a fatty acyl-[ACP] + malonyl-[ACP] + H(+) = a 3-oxoacyl-[ACP] + holo-[ACP] + CO2. The catalysed reaction is (3Z)-decenoyl-[ACP] + malonyl-[ACP] + H(+) = 3-oxo-(5Z)-dodecenoyl-[ACP] + holo-[ACP] + CO2. Its pathway is lipid metabolism; fatty acid biosynthesis. Its function is as follows. Involved in the type II fatty acid elongation cycle. Catalyzes the elongation of a wide range of acyl-ACP by the addition of two carbons from malonyl-ACP to an acyl acceptor. Can also use unsaturated fatty acids. Catalyzes a key reaction in unsaturated fatty acid (UFA) synthesis, the elongation of the cis-3-decenoyl-ACP produced by FabA. The polypeptide is 3-oxoacyl-[acyl-carrier-protein] synthase 1 (fabB) (Haemophilus influenzae (strain ATCC 51907 / DSM 11121 / KW20 / Rd)).